A 741-amino-acid polypeptide reads, in one-letter code: Ribosome-releasing factor 2, mitochondrial (741 aa).

A mitochondrion-targeting transit peptide spans 1–29; that stretch reads MLKYEFLHGLQKRSHYLRQLSGQFFSRSY. Residues 31–310 form the tr-type G domain; that stretch reads SKIRNIGILA…AVNSYLPAPE (280 aa). Residues 40–47, 104–108, and 158–161 each bind GTP; these read AHIDAGKT, DTPGH, and NKMD.

This sequence belongs to the TRAFAC class translation factor GTPase superfamily. Classic translation factor GTPase family. EF-G/EF-2 subfamily.

The protein resides in the mitochondrion. In terms of biological role, mitochondrial GTPase that mediates the disassembly of ribosomes from messenger RNA at the termination of mitochondrial protein biosynthesis. Not involved in the GTP-dependent ribosomal translocation step during translation elongation. In Drosophila ananassae (Fruit fly), this protein is Ribosome-releasing factor 2, mitochondrial.